A 118-amino-acid chain; its full sequence is MARIAGVNIPDNKHTVISLTYIYGVGRTTAQKICATTGVNPAVKIKDLSDEQIEQLRGEVAKFTTEGDLRREINMKIKRLMDLGCYRGLRHRRGLPVRGQRTKTNARTRKGPRKPIRK.

The tract at residues 93 to 118 (RGLPVRGQRTKTNARTRKGPRKPIRK) is disordered.

The protein belongs to the universal ribosomal protein uS13 family. Part of the 30S ribosomal subunit. Forms a loose heterodimer with protein S19. Forms two bridges to the 50S subunit in the 70S ribosome.

Located at the top of the head of the 30S subunit, it contacts several helices of the 16S rRNA. In the 70S ribosome it contacts the 23S rRNA (bridge B1a) and protein L5 of the 50S subunit (bridge B1b), connecting the 2 subunits; these bridges are implicated in subunit movement. Contacts the tRNAs in the A and P-sites. The chain is Small ribosomal subunit protein uS13 from Pseudomonas syringae pv. tomato (strain ATCC BAA-871 / DC3000).